The primary structure comprises 537 residues: Tegument protein BRRF2 (537 aa).

Disordered stretches follow at residues P322 to F466 and G486 to V537. Polar residues predominate over residues E334–N347. The span at V420 to G441 shows a compositional bias: low complexity. The segment covering D492 to E517 has biased composition (acidic residues).

Belongs to the lymphocryptovirus BRRF2 family.

It localises to the virion tegument. The protein is Tegument protein BRRF2 of Homo sapiens (Human).